The following is an 85-amino-acid chain: Small proline-rich protein 2D (85 aa).

Residues 1–11 (MSYQQQQCKQP) are compositionally biased toward low complexity. The segment at 1-20 (MSYQQQQCKQPCQPPPVCPP) is disordered. 4 tandem repeats follow at residues 21 to 29 (KKCPEPCPP), 30 to 38 (LKCPEPCPP), 39 to 47 (PKCPEPCPP), and 48 to 56 (PKCPEPCPE). The tract at residues 21 to 56 (KKCPEPCPPLKCPEPCPPPKCPEPCPPPKCPEPCPE) is 4 X 9 AA approximate tandem repeats. A disordered region spans residues 57-85 (PCPPPSCQQKCPPAQPPPPCQQKCPPKSK).

It belongs to the cornifin (SPRR) family. In terms of tissue distribution, expressed in uterus.

It localises to the cytoplasm. Functionally, cross-linked envelope protein of keratinocytes. It is a keratinocyte protein that first appears in the cell cytosol, but ultimately becomes cross-linked to membrane proteins by transglutaminase. All that results in the formation of an insoluble envelope beneath the plasma membrane. The protein is Small proline-rich protein 2D (Sprr2d) of Mus musculus (Mouse).